Consider the following 451-residue polypeptide: UDP-N-acetyl-alpha-D-muramoyl-L-alanyl-L-glutamate epimerase (451 aa).

It belongs to the MurL family.

The catalysed reaction is UDP-N-acetyl-alpha-D-muramoyl-L-alanyl-L-glutamate + ATP + H2O = UDP-N-acetyl-alpha-D-muramoyl-L-alanyl-D-glutamate + AMP + diphosphate + H(+). The protein operates within cell wall biogenesis; peptidoglycan biosynthesis. Functionally, cell wall formation. Catalyzes epimerization of the terminal L-glutamate in UDP-N-acetyl-alpha-D-muramoyl-L-alanyl-L-glutamate. The sequence is that of UDP-N-acetyl-alpha-D-muramoyl-L-alanyl-L-glutamate epimerase from Xanthomonas oryzae pv. oryzae (strain MAFF 311018).